A 363-amino-acid chain; its full sequence is MAPAGHPGAKRGILERLESGEVVIGDGSFLITLEKRGYVKAGLWTPEAVIEHPDAVRQLHMEFLRAGSNVMQTFTFSASEDNMESKWEDVNAAACDLAREVAGKGDALVAGGICQTSIYKYHKDEARIKKLFRQQLEVFAWKNVDFLIAEYFEHVEEAVWAVEVLKESDRPVAVTMCISPEGDMHDITPGECAVRLVKAGASIVGVNCRFGPETSLKTIELMKEGLQRAGLKAHLMVQPLGFHTPDCGKEGFVDLPEYPFGLESRAATRWDIQKYAREAYNQGVRYIGGCCGFEPYHIRAIAEELAPERGFLPPASEKHGSWGSALDMHTKPWVRARARREYWENLLPASGRPFCPSLSKPDV.

In terms of domain architecture, Hcy-binding spans 11-305; sequence RGILERLESG…YHIRAIAEEL (295 aa). Zn(2+) contacts are provided by C208, C290, and C291. The residue at position 321 (S321) is a Phosphoserine.

Homotetramer. Requires Zn(2+) as cofactor.

The catalysed reaction is S-methyl-L-methionine + L-homocysteine = 2 L-methionine + H(+). Its pathway is amino-acid biosynthesis; L-methionine biosynthesis via de novo pathway; L-methionine from L-homocysteine (BhmT route): step 1/1. In terms of biological role, involved in the regulation of homocysteine metabolism. Converts betaine and homocysteine to dimethylglycine and methionine, respectively. This reaction is also required for the irreversible oxidation of choline. In Pongo abelii (Sumatran orangutan), this protein is S-methylmethionine--homocysteine S-methyltransferase BHMT2 (BHMT2).